Consider the following 263-residue polypeptide: 5'-nucleotidase SurE (263 aa).

The a divalent metal cation site is built by D21, D22, S52, and N105.

The protein belongs to the SurE nucleotidase family. The cofactor is a divalent metal cation.

It is found in the cytoplasm. The catalysed reaction is a ribonucleoside 5'-phosphate + H2O = a ribonucleoside + phosphate. In terms of biological role, nucleotidase that shows phosphatase activity on nucleoside 5'-monophosphates. The protein is 5'-nucleotidase SurE of Vibrio cholerae serotype O1 (strain ATCC 39541 / Classical Ogawa 395 / O395).